Consider the following 946-residue polypeptide: MSQTITSLDPNCVIVFNKTSSANEKSLNVEFKRLNIHSIIEPGHDLQTSYAFIRIHQDNAKPLFSFLQNLDFIESIIPYHDTELSDDLHKLISISKSKILEAPKQYELYNLSNLTNNPKQSLYFAFLQNYIKWLIPFSFFGLSIRFLSNFTYEFNSTYSLFAILWTLSFTAFWLYKYEPFWSDRLSKYSSFSTIEFLQDKQKAQKKASSVIMLKKCCFIPVALLFGAILLSFQLYCFALEIFIKQIYNGPMISILSFLPTILICTFTPVLTVIYNKYFVEPMTKWENHSSVVNAKKSKEAKNFVIIFLSSYVPLLITLFLYLPMGHLLTAEIRTKVFNAFSILARLPTHDSDFIIDTKRYEDQFFYFIVINQLIQFSMENFVPSLVSIAQQKINGPNPNFVKAESEIGKAQLSSSDMKIWSKVKSYQTDPWGATFDLDANFKKLLLQFGYLVMFSTIWPLAPFICLIVNLIVYQVDLRKAVLYSKPEYFPFPIYDKPSSVSNTQKLTVGLWNSVLVMFSILGCVITATLTYMYQSCNIPGVGAHTSIHTNKAWYLANPINHSWINIVLYAVFIEHVSVAIFFLFSSILKSSHDDVANGIVPKHVVNVQNPPKQEVFEKIPSPEFNSNNEKELVQRKGSANEKLHQELGEKQPASSANGYEAHAATHANNDPSSLSSASSPSLSSSSSSSKTGVVKAVDNDTAGSAGKKPLATESTEKRNSLVKVPTVGSYGVAGATLPETIPTSKNYYLRFDEDGKSIRDAKSSAESSNATNNNTLGTESKLLPDGDAVDALSRKIDQIPKIAVTGGENNENTQAKDDAATKTPLIKDANIKPVVNAAVNDNQSKVSVATEQTKKTEVSTKNGPSRSISTKETKDSARPSNNNTTTTTTTDATQPHHHHHHHRHRDAGVKNVTNNSKTTESSSSSSAAKEKPKHKKGLLHKLKKKL.

Residues 1 to 121 (MSQTITSLDP…SNLTNNPKQS (121 aa)) are Cytoplasmic-facing. A helical membrane pass occupies residues 122 to 142 (LYFAFLQNYIKWLIPFSFFGL). Topologically, residues 143 to 153 (SIRFLSNFTYE) are extracellular. The helical transmembrane segment at 154–174 (FNSTYSLFAILWTLSFTAFWL) threads the bilayer. At 175 to 217 (YKYEPFWSDRLSKYSSFSTIEFLQDKQKAQKKASSVIMLKKCC) the chain is on the cytoplasmic side. The chain crosses the membrane as a helical span at residues 218–238 (FIPVALLFGAILLSFQLYCFA). Residues 239 to 253 (LEIFIKQIYNGPMIS) lie on the Extracellular side of the membrane. The helical transmembrane segment at 254-274 (ILSFLPTILICTFTPVLTVIY) threads the bilayer. At 275–302 (NKYFVEPMTKWENHSSVVNAKKSKEAKN) the chain is on the cytoplasmic side. The helical transmembrane segment at 303 to 323 (FVIIFLSSYVPLLITLFLYLP) threads the bilayer. The Extracellular segment spans residues 324–447 (MGHLLTAEIR…DANFKKLLLQ (124 aa)). A helical membrane pass occupies residues 448-468 (FGYLVMFSTIWPLAPFICLIV). The Cytoplasmic segment spans residues 469–505 (NLIVYQVDLRKAVLYSKPEYFPFPIYDKPSSVSNTQK). A helical transmembrane segment spans residues 506–526 (LTVGLWNSVLVMFSILGCVIT). Residues 527 to 563 (ATLTYMYQSCNIPGVGAHTSIHTNKAWYLANPINHSW) are Extracellular-facing. The helical transmembrane segment at 564–584 (INIVLYAVFIEHVSVAIFFLF) threads the bilayer. Topologically, residues 585–946 (SSILKSSHDD…GLLHKLKKKL (362 aa)) are cytoplasmic. 2 disordered regions span residues 617-638 (EKIPSPEFNSNNEKELVQRKGS) and 665-718 (THAN…TEKR). A compositionally biased stretch (basic and acidic residues) spans 628-638 (NEKELVQRKGS). Serine 638 carries the phosphoserine modification. Low complexity predominate over residues 671–689 (PSSLSSASSPSLSSSSSSS). Threonine 701 is subject to Phosphothreonine. Phosphoserine occurs at positions 704 and 720. Threonine 726 bears the Phosphothreonine mark. At serine 729 the chain carries Phosphoserine. Tyrosine 730 bears the Phosphotyrosine mark. Phosphoserine is present on serine 757. Residues 759 to 784 (RDAKSSAESSNATNNNTLGTESKLLP) form a disordered region. Low complexity predominate over residues 764–775 (SAESSNATNNNT). Residues serine 793, serine 844, and serine 847 each carry the phosphoserine modification. The tract at residues 846–946 (VSVATEQTKK…GLLHKLKKKL (101 aa)) is disordered. Threonine 850 carries the phosphothreonine modification. The span at 859 to 868 (STKNGPSRSI) shows a compositional bias: polar residues. A compositionally biased stretch (low complexity) spans 884-893 (TTTTTTTDAT). Basic residues predominate over residues 895–905 (PHHHHHHHRHR). Over residues 916–927 (SKTTESSSSSSA) the composition is skewed to low complexity. Positions 931-946 (KPKHKKGLLHKLKKKL) are enriched in basic residues.

Interacts with BTN2.

The protein localises to the cell membrane. Its function is as follows. May be involved in ion homeostasis together with BTN1 or BTN2. The sequence is that of Increased sodium tolerance protein 2 (IST2) from Saccharomyces cerevisiae (strain ATCC 204508 / S288c) (Baker's yeast).